A 251-amino-acid polypeptide reads, in one-letter code: tRNA (guanine-N(7)-)-methyltransferase (251 aa).

The interval 1–43 (MQPNEQPGTGPADTTLEQQDTAAAEVGHPRRIRSFVRRAGRTS) is disordered. The span at 29–40 (PRRIRSFVRRAG) shows a compositional bias: basic residues. S-adenosyl-L-methionine contacts are provided by Glu82, Glu107, Asp134, and Asp157. Asp157 is a catalytic residue. Lys161 contributes to the substrate binding site. The tract at residues 163-168 (RHNKRR) is interaction with RNA. Substrate is bound by residues Asp193 and 228-231 (TKFE).

Belongs to the class I-like SAM-binding methyltransferase superfamily. TrmB family.

It catalyses the reaction guanosine(46) in tRNA + S-adenosyl-L-methionine = N(7)-methylguanosine(46) in tRNA + S-adenosyl-L-homocysteine. Its pathway is tRNA modification; N(7)-methylguanine-tRNA biosynthesis. Catalyzes the formation of N(7)-methylguanine at position 46 (m7G46) in tRNA. This Ralstonia nicotianae (strain ATCC BAA-1114 / GMI1000) (Ralstonia solanacearum) protein is tRNA (guanine-N(7)-)-methyltransferase.